We begin with the raw amino-acid sequence, 380 residues long: Rab9 effector protein with kelch motifs (380 aa).

Kelch repeat units follow at residues 57–103 (KIFI…FLPS), 108–154 (SIWV…TSSA), 159–211 (QLYV…AAGT), 212–258 (KLFI…AAVA), 262–311 (HVYM…VIPW), and 357–380 (LCFV…TVVD).

Interacts with PIKFYVE; the interaction recruits RABEPK to the endosomal membrane. Interacts with RAB9 in its GTP-bound conformation. Phosphorylated on Ser residues by PIKFYVE.

The protein resides in the cytoplasm. It is found in the endosome membrane. Rab9 effector required for endosome to trans-Golgi network (TGN) transport. The chain is Rab9 effector protein with kelch motifs from Mus musculus (Mouse).